A 228-amino-acid polypeptide reads, in one-letter code: Phosphoribosylformylglycinamidine synthase subunit PurQ (228 aa).

A Glutamine amidotransferase type-1 domain is found at 3 to 226 (FAVIVFPGSN…IANWRDSYAI (224 aa)). Cys-87 (nucleophile) is an active-site residue. Catalysis depends on residues His-195 and Glu-197.

As to quaternary structure, part of the FGAM synthase complex composed of 1 PurL, 1 PurQ and 2 PurS subunits.

The protein localises to the cytoplasm. The enzyme catalyses N(2)-formyl-N(1)-(5-phospho-beta-D-ribosyl)glycinamide + L-glutamine + ATP + H2O = 2-formamido-N(1)-(5-O-phospho-beta-D-ribosyl)acetamidine + L-glutamate + ADP + phosphate + H(+). The catalysed reaction is L-glutamine + H2O = L-glutamate + NH4(+). The protein operates within purine metabolism; IMP biosynthesis via de novo pathway; 5-amino-1-(5-phospho-D-ribosyl)imidazole from N(2)-formyl-N(1)-(5-phospho-D-ribosyl)glycinamide: step 1/2. In terms of biological role, part of the phosphoribosylformylglycinamidine synthase complex involved in the purines biosynthetic pathway. Catalyzes the ATP-dependent conversion of formylglycinamide ribonucleotide (FGAR) and glutamine to yield formylglycinamidine ribonucleotide (FGAM) and glutamate. The FGAM synthase complex is composed of three subunits. PurQ produces an ammonia molecule by converting glutamine to glutamate. PurL transfers the ammonia molecule to FGAR to form FGAM in an ATP-dependent manner. PurS interacts with PurQ and PurL and is thought to assist in the transfer of the ammonia molecule from PurQ to PurL. The protein is Phosphoribosylformylglycinamidine synthase subunit PurQ of Oceanobacillus iheyensis (strain DSM 14371 / CIP 107618 / JCM 11309 / KCTC 3954 / HTE831).